The following is a 344-amino-acid chain: Polycomb group RING finger protein 2 (344 aa).

The RING-type zinc finger occupies 18–57; sequence CALCGGYFIDATTIVECLHSFCKTCIVRYLETNKYCPMCD. Residues Lys51 and Lys88 each participate in a glycyl lysine isopeptide (Lys-Gly) (interchain with G-Cter in SUMO2) cross-link. The short motif at 81–95 is the Nuclear localization signal element; it reads KLVPGLFKDEMKRRR. Positions 240 to 253 are enriched in polar residues; it reads TVPTPSEGTNTSGA. A disordered region spans residues 240 to 344; it reads TVPTPSEGTN…VNGAPVPPLT (105 aa). Over residues 263–313 the composition is skewed to low complexity; sequence APSPATLPATSSSLPSPATPSHGSPSSHGPPATHPTSPTPPSTASGATTAA. The span at 314 to 328 shows a compositional bias: polar residues; that stretch reads NGGSLNCLQTPSSTS. Thr344 is modified (phosphothreonine).

In terms of assembly, exists as both a monomer and homodimer. Component of a PRC1-like complex. Interacts with CBX8, RING1 and RNF2. Interacts with CBX7. Interacts with PHC2. In terms of processing, phosphorylated. Homodimer formation is regulated by phosphorylation with only unphosphorylated proteins forming homodimers. Detected in all tissues examined with high expression found in placenta lung and kidney and low expression, in liver, pancreas and skeletal muscle.

It localises to the nucleus. Transcriptional repressor. Binds specifically to the DNA sequence 5'-GACTNGACT-3'. Has tumor suppressor activity. May play a role in control of cell proliferation and/or neural cell development. Regulates proliferation of early T progenitor cells by maintaining expression of HES1. Also plays a role in antero-posterior specification of the axial skeleton and negative regulation of the self-renewal activity of hematopoietic stem cells. Component of a Polycomb group (PcG) multiprotein PRC1-like complex, a complex class required to maintain the transcriptionally repressive state of many genes, including Hox genes, throughout development. PcG PRC1 complex acts via chromatin remodeling and modification of histones; it mediates monoubiquitination of histone H2A 'Lys-119', rendering chromatin heritably changed in its expressibility. Within the PRC1-like complex, regulates RNF2 ubiquitin ligase activity. The sequence is that of Polycomb group RING finger protein 2 (PCGF2) from Homo sapiens (Human).